The following is a 499-amino-acid chain: MAALTMQFEGEKKNVSEVADVTLKQEDEQQERRSYSTPFREERDTFGPIQVPSDKLWGAQTQRSLQNFEIGGDRERMPEPIVRAFGVLKKCAAKVNMEYGLDPMIGEAIMEAAQEVAEGKLNDHFPLVVWQTGSGTQSNMNANEVIANRAAEILGHKRGEKIVHPNDHVNRSQSSNDTFPTVMHIAAATEITSRLIPSLKNLHSSLESKSFEFKDIVKIGRTHTQDATPLTLGQEFGGYATQVEYGLNRVACTLPRIYQLAQGGTAVGTGLNTKKGFDVKIAAAVAEETNLPFVTAENKFEALAAHDACVETSGSLNTIATSLMKIANDIRFLGSGPRCGLGELSLPENEPGSSIMPGKVNPTQCEALTMVCAQVMGNHVAVTIGGSNGHFELNVFKPVIASALLHSIRLIADASASFEKNCVRGIEANRERISKLLHESLMLVTSLNPKIGYDNAAAVAKRAHKEGCTLKHAAMKLGVLTSEEFDTLVVPEKMIGPSD.

The interval 19–51 (ADVTLKQEDEQQERRSYSTPFREERDTFGPIQV) is disordered. A compositionally biased stretch (basic and acidic residues) spans 23–45 (LKQEDEQQERRSYSTPFREERDT). Substrate contacts are provided by residues 134–136 (SGT), 164–167 (HPND), 174–176 (SSN), and threonine 222. The Proton donor/acceptor role is filled by histidine 223. Serine 353 is a catalytic residue. Residues serine 354 and 359 to 361 (KVN) contribute to the substrate site.

Belongs to the class-II fumarase/aspartase family. Fumarase subfamily. Homotetramer.

The protein localises to the cytoplasm. The protein resides in the cytosol. The enzyme catalyses (S)-malate = fumarate + H2O. With respect to regulation, fumarate hydratase activity (fumarate to L-malate) is strongly inhibited by phosphoenolpyruvate, citrate, oxaloacetate, ATP and ADP. Malate dehydratase activity (malate to fumarate) is activated by oxaloacetate, Asn and Gln. Malate dehydratase activity (malate to fumarate) is inhibited by citrate, succinate, ADP and ATP. In terms of biological role, cytosolic fumarate hydratase that catalyzes the reversible stereospecific interconversion of fumarate to L-malate. Catalyzes the dehydration of L-malate to fumarate in the cytosol: required for the massive fumarate accumulation during the day in plants grown under high nitrogen. Also required for acclimation of photosynthesis to cold: acts by mediating accumulation of fumarate at low temperature, leading to reduce accumulation of phosphorylated sugars. The sequence is that of Fumarate hydratase 2 from Arabidopsis thaliana (Mouse-ear cress).